A 100-amino-acid chain; its full sequence is Urease subunit gamma (100 aa).

The protein belongs to the urease gamma subunit family. In terms of assembly, heterotrimer of UreA (gamma), UreB (beta) and UreC (alpha) subunits. Three heterotrimers associate to form the active enzyme.

Its subcellular location is the cytoplasm. The catalysed reaction is urea + 2 H2O + H(+) = hydrogencarbonate + 2 NH4(+). Its pathway is nitrogen metabolism; urea degradation; CO(2) and NH(3) from urea (urease route): step 1/1. Its function is as follows. Expression of the urease operon increases the likelihood of bacterial survival by contributing to acid resistance in vitro and in vivo in BALB/c mice. Y.enterocolitica enters the body via an oral path and must survive the acidic stomach before being able to colonize the intestinal mucosa. In Yersinia enterocolitica, this protein is Urease subunit gamma.